The sequence spans 207 residues: Ribonuclease HII (207 aa).

One can recognise an RNase H type-2 domain in the interval 10–199; sequence RLIAGVDEVG…VRNALLDAEL (190 aa). The a divalent metal cation site is built by D16, E17, and D108.

This sequence belongs to the RNase HII family. The cofactor is Mn(2+). Mg(2+) is required as a cofactor.

It localises to the cytoplasm. The enzyme catalyses Endonucleolytic cleavage to 5'-phosphomonoester.. Functionally, endonuclease that specifically degrades the RNA of RNA-DNA hybrids. This Erwinia tasmaniensis (strain DSM 17950 / CFBP 7177 / CIP 109463 / NCPPB 4357 / Et1/99) protein is Ribonuclease HII.